Here is a 364-residue protein sequence, read N- to C-terminus: Aminomethyltransferase (364 aa).

The protein belongs to the GcvT family. The glycine cleavage system is composed of four proteins: P, T, L and H.

It carries out the reaction N(6)-[(R)-S(8)-aminomethyldihydrolipoyl]-L-lysyl-[protein] + (6S)-5,6,7,8-tetrahydrofolate = N(6)-[(R)-dihydrolipoyl]-L-lysyl-[protein] + (6R)-5,10-methylene-5,6,7,8-tetrahydrofolate + NH4(+). Its function is as follows. The glycine cleavage system catalyzes the degradation of glycine. The polypeptide is Aminomethyltransferase (Shewanella sediminis (strain HAW-EB3)).